The sequence spans 311 residues: Probable inactive peptidyl-prolyl cis-trans isomerase-like 6 (311 aa).

The PPIase cyclophilin-type domain occupies 145–308 (FLDICIDSSP…HMCRITDSGD (164 aa)).

Belongs to the cyclophilin-type PPIase family.

Its function is as follows. Probable inactive PPIase with no peptidyl-prolyl cis-trans isomerase activity. This Homo sapiens (Human) protein is Probable inactive peptidyl-prolyl cis-trans isomerase-like 6.